A 481-amino-acid polypeptide reads, in one-letter code: Fibrinogen beta chain (481 aa).

The first 19 residues, 1-19, serve as a signal peptide directing secretion; sequence MRHLWLLLLLCVFSVQTQA. The interval 22-81 is disordered; it reads DDYDEPTDSLDARGHRPVDRRKEEPPSLRPAPPPISGGGYRARPAKATANQKKVERRPPD. Basic and acidic residues predominate over residues 31–47; the sequence is LDARGHRPVDRRKEEPP. The beta-chain polymerization, binding distal domain of another fibrin stretch occupies residues 35 to 37; it reads GHR. Positions 149–213 form a coiled coil; sequence QAQVKENENV…SDISAQMEYC (65 aa). 2 cysteine pairs are disulfide-bonded: Cys221–Cys306 and Cys231–Cys260. The Fibrinogen C-terminal domain occupies 222–478; that stretch reads NIPVVSGKEC…RMSMKIRPFF (257 aa). Asn384 carries an N-linked (GlcNAc...) asparagine glycan. The cysteines at positions 414 and 427 are disulfide-linked.

Heterohexamer; disulfide linked. Contains 2 sets of 3 non-identical chains (alpha, beta and gamma). The 2 heterotrimers are in head to head conformation with the N-termini in a small central domain. Post-translationally, conversion of fibrinogen to fibrin is triggered by thrombin, which cleaves fibrinopeptides A and B from alpha and beta chains, and thus exposes the N-terminal polymerization sites responsible for the formation of the soft clot.

The protein localises to the secreted. Cleaved by the protease thrombin to yield monomers which, together with fibrinogen alpha (FGA) and fibrinogen gamma (FGG), polymerize to form an insoluble fibrin matrix. Fibrin has a major function in hemostasis as one of the primary components of blood clots. In addition, functions during the early stages of wound repair to stabilize the lesion and guide cell migration during re-epithelialization. Was originally thought to be essential for platelet aggregation, based on in vitro studies using anticoagulated blood. However, subsequent studies have shown that it is not absolutely required for thrombus formation in vivo. Enhances expression of SELP in activated platelets via an ITGB3-dependent pathway. Maternal fibrinogen is essential for successful pregnancy. Fibrin deposition is also associated with infection, where it protects against IFNG-mediated hemorrhage. May also facilitate the immune response via both innate and T-cell mediated pathways. This is Fibrinogen beta chain (Fgb) from Mus musculus (Mouse).